A 370-amino-acid polypeptide reads, in one-letter code: Peptidyl-prolyl cis-trans isomerase D (370 aa).

Serine 5 bears the Phosphoserine mark. The 165-residue stretch at 19-183 folds into the PPIase cyclophilin-type domain; sequence FFDVDIGGER…KLCVIAECGE (165 aa). At lysine 171 the chain carries N6-acetyllysine. Residues 185-215 are chaperone activity; it reads KEGDEWGIFPKDGSGDSHPDFPEDADIDLKD. At serine 198 the chain carries Phosphoserine. Positions 214–370 are interaction with HSP90AB1; sequence KDVDKILLIS…EKAVYAKMFA (157 aa). TPR repeat units follow at residues 223-256, 273-306, and 308-340; these read SEDLKNIGNTFFKSQNWEMAIKKYAKVLRYLDSS, LSCVLNIGACKLKMSNWQGAIDSCLEALEMDPSN, and KALYRKAQGWQGLKEYDQALADLKKAQEIAPGD.

This sequence belongs to the cyclophilin-type PPIase family. PPIase D subfamily. As to quaternary structure, identified in ESR1 or NR3C1/GCR steroid receptor-chaperone complexes. Found in HSP90 chaperone complexes with kinase clients LCK or EIF2AK1. Two monomers associate with one HSP90 homodimer. Interacts with HSP90AA1. Interacts with HSP90AB1; PPID and FKBP4 compete for binding to HSP90AB1 and the interaction is mutually exclusive with the PPID:HSPA8 interaction. Interacts with HSPA8; PPID and STIP1 but not FKBP4 compete for binding to HSPA8 and the interaction is mutually exclusive with the PPID:HSP90AB1 interaction. Interacts with S100A1 and S100A2; the interactions dissociate the PPID:HSP90AA1 interaction. Interacts with S100A6. Interacts with MYB, ILF2, XRCC6, RACK1 and RPS3. Interacts with cytoplasmic dynein 1 intermediate chain (DYNC1I1 or DYNC1I2).

The protein localises to the cytoplasm. It is found in the nucleus. Its subcellular location is the nucleolus. It localises to the nucleoplasm. It catalyses the reaction [protein]-peptidylproline (omega=180) = [protein]-peptidylproline (omega=0). With respect to regulation, less sensitive to inhibition by cyclosporin A than is CYP-18. Its function is as follows. PPIase that catalyzes the cis-trans isomerization of proline imidic peptide bonds in oligopeptides and may therefore assist protein folding. Proposed to act as a co-chaperone in HSP90 complexes such as in unligated steroid receptors heterocomplexes. Different co-chaperones seem to compete for association with HSP90 thus establishing distinct HSP90-co-chaperone-receptor complexes with the potential to exert tissue-specific receptor activity control. May have a preference for estrogen receptor complexes and is not found in glucocorticoid receptor complexes. May be involved in cytoplasmic dynein-dependent movement of the receptor from the cytoplasm to the nucleus. May regulate MYB by inhibiting its DNA-binding activity. Involved in regulation of AHR signaling by promoting the formation of the AHR:ARNT dimer; the function is independent of HSP90 but requires the chaperone activity region. Involved in regulation of UV radiation-induced apoptosis. The sequence is that of Peptidyl-prolyl cis-trans isomerase D from Rattus norvegicus (Rat).